Reading from the N-terminus, the 988-residue chain is Protein SEMI-ROLLED LEAF 2 (988 aa).

The tract at residues 844–865 is disordered; sequence SVDGGLHESPITNTGSSISKTT. Residues 853 to 865 are compositionally biased toward polar residues; it reads PITNTGSSISKTT.

In terms of tissue distribution, expressed in root tips, and in the vascular bundles of leaf blades, leaf sheaths, and roots, especially in their sclerenchymatous cells.

It localises to the nucleus. The protein localises to the cytoplasm. In terms of biological role, functions in regulating leaf rolling through abaxial side leaf cell differentiation. May be involved in the transdifferentiation process from mesophyll cells to sclerenchymatous cells. This is Protein SEMI-ROLLED LEAF 2 from Oryza sativa subsp. japonica (Rice).